The chain runs to 794 residues: MEGNLSFSLMEASGRSIFFLIEGIREQSIKNMFSRMFSWSFVVAACLAGLFPAQSQGEEKAAQSGTIAVKVPASSLLMTRQETGETRLDRSFSNAGLSIGGKKYATGIGTHATSMIPLPVPENPKVLRLEGACGIDDGADGDGSVEFRVMSGSEVLWSSGVMRRGMAAKKFSIPVAENGIRHLYLMADRVDNNSYDHADWVDLAWKTTGSGQGMKGAVVNASEFGMVPGVRKDQGPALRAAVSALRRQGGGVLNIPRGIYHFYPEGALNMSFHISNHDQPLIHPVCVPLADLRNVRVEGNGSLFLFHGKVVPLLVMDSENVSINRLSVDYERSWCTEARVVKTDDRFTEVEIDKKAYPYEIRNNRFVFQGKGWEEGMGSCMAFEKGTGHIIANTSDIGWNGHVEPLGGSRLRLSWNLRQKGIKPGDTLVLRNYNRPHPGCVVYRARKTSLNDVSLHQSSGMALLVQRSEDFHMKGGGVMVRKGTGRVHTAGADATHFSNTRGGIVVEKALFEGMMDDAINVHSTCLGVMEVVDSHTLKCKYMHRQAVGFEVFLPGEKIRFINGPTLEPGGTATVKTAVKKNSAEMVITVEEPLPSSVRAGDAVENADFYPSVVFRNNIVRNNRARGSLFTTPERVLVEGNLFDHSSGSAILLAGDAQGWYESGACHEVVIRKNTFINNLTSRYQFTNAIISIYPEVKQLDRQRDYYHRNVLIENNVFKTFDVPLLFAISTDNLKFINNKVIYNDEFKGWGQKPFQFRRCANILIKDNKVLPPRTWTLEDCKLENTPSDQVRFGG.

The N-terminal stretch at 1-57 (MEGNLSFSLMEASGRSIFFLIEGIREQSIKNMFSRMFSWSFVVAACLAGLFPAQSQG) is a signal peptide. 5 PbH1 repeats span residues 468 to 499 (SEDF…HFSN), 609 to 631 (YPSV…LFTT), 632 to 654 (PERV…LLAG), 665 to 686 (CHEV…YQFT), and 707 to 728 (HRNV…LFAI).

Belongs to the glycosyl hydrolase 110 family. B subfamily.

The catalysed reaction is Hydrolysis of terminal, non-reducing branched (1-&gt;3)-alpha-D-galactosidic residues, producing free D-galactose.. The enzyme catalyses Hydrolysis of terminal, non-reducing linear (1-&gt;3)-alpha-D-galactosidic residues, producing free D-galactose.. It catalyses the reaction Hydrolysis of terminal, non-reducing alpha-D-galactose residues in alpha-D-galactosides, including galactose oligosaccharides, galactomannans and galactolipids.. Its function is as follows. Alpha-galactosidase. Removes both branched alpha-1,3-linked galactose residues of blood group B antigens and linear alpha-1,3-linked galactose structures. This Akkermansia muciniphila (strain ATCC BAA-835 / DSM 22959 / JCM 33894 / BCRC 81048 / CCUG 64013 / CIP 107961 / Muc) protein is Alpha-1,3-galactosidase B (glaB).